The sequence spans 155 residues: uncharacterized protein (155 aa).

This is an uncharacterized protein from Agrobacterium vitis (Rhizobium vitis).